The primary structure comprises 89 residues: Strongylocin 2 (89 aa).

A signal peptide spans M1 to A22. Residues D23–S38 constitute a propeptide that is removed on maturation. W39 carries the 6'-bromotryptophan modification.

Contains 3 disulfide bonds.

Has antimicrobial activity against Gram-negative bacteria and Gram-positive bacteria with minimum inhibitory concentration (MIC) between 0.78 uM and 3.13 uM. In Echinus esculentus (Sea urchin), this protein is Strongylocin 2.